The sequence spans 694 residues: Elongation factor G (694 aa).

Positions 12–286 (SKLRNIGIMA…AVVDYLPSPI (275 aa)) constitute a tr-type G domain. GTP is bound by residues 21–28 (AHIDAGKT), 85–89 (DTPGH), and 139–142 (NKMD).

The protein belongs to the TRAFAC class translation factor GTPase superfamily. Classic translation factor GTPase family. EF-G/EF-2 subfamily.

The protein resides in the cytoplasm. Catalyzes the GTP-dependent ribosomal translocation step during translation elongation. During this step, the ribosome changes from the pre-translocational (PRE) to the post-translocational (POST) state as the newly formed A-site-bound peptidyl-tRNA and P-site-bound deacylated tRNA move to the P and E sites, respectively. Catalyzes the coordinated movement of the two tRNA molecules, the mRNA and conformational changes in the ribosome. The polypeptide is Elongation factor G (Pseudothermotoga lettingae (strain ATCC BAA-301 / DSM 14385 / NBRC 107922 / TMO) (Thermotoga lettingae)).